Consider the following 972-residue polypeptide: Peptidyl-glycine alpha-amidating monooxygenase (972 aa).

The N-terminal stretch at 1 to 20 (MAGFRSLLVLLLVFPSGCVG) is a signal peptide. The peptidylglycine alpha-hydroxylating monooxygenase stretch occupies residues 1-494 (MAGFRSLLVL…EGTWEPEHTG (494 aa)). Positions 21 to 30 (FRSPLSVFKR) are excised as a propeptide. Over 31–873 (FKETTRSFSN…VPAVLITTLL (843 aa)) the chain is Intragranular. 5 disulfide bridges follow: Cys-42–Cys-181, Cys-76–Cys-121, Cys-109–Cys-126, Cys-222–Cys-329, and Cys-288–Cys-310. The Cu(2+) site is built by His-102 and His-103. Residues His-167, His-237, His-239, and Met-309 each contribute to the Cu(2+) site. Residues 495–817 (DFHVEEALDW…STEKMEHRSV (323 aa)) are peptidyl-alpha-hydroxyglycine alpha-amidating lyase. NHL repeat units follow at residues 498 to 541 (VEEA…NSFD), 567 to 608 (AAVL…LDPK), 617 to 662 (LGRS…FSPS), and 670 to 714 (GEAS…FKTD). Val-517 provides a ligand contact to Ca(2+). Arg-530 is a binding site for a protein. His-582 lines the Zn(2+) pocket. Leu-584 contributes to the Ca(2+) binding site. An intrachain disulfide couples Cys-631 to Cys-652. Tyr-651 is a binding site for a protein. Residue His-687 participates in Zn(2+) binding. A disulfide bridge links Cys-699 with Cys-710. Position 703 (Arg-703) interacts with a protein. N-linked (GlcNAc...) asparagine glycosylation is present at Asn-762. Residues 766–809 (GEIIDVFKPVRKHFDMPHDIAASEDGTVYVGDAHTNTVWKFTST) form an NHL 5 repeat. Residue His-783 coordinates Zn(2+). Ca(2+) is bound at residue Asp-784. The chain crosses the membrane as a helical span at residues 874-897 (VIPVVVLLAIALFIRWKKSRAFGD). Residues 898-972 (SERKLEASSG…APPPAPAPSS (75 aa)) lie on the Cytoplasmic side of the membrane. The tract at residues 925-942 (NFFASRKGYSRKGFDRLS) is interaction with RASSF9. Phosphoserine is present on residues Ser-929 and Ser-942. Residues 937–972 (GFDRLSTEGSDQEKDEDASESEEEYSAPPPAPAPSS) form a disordered region. Thr-943 is modified (phosphothreonine). Residue Ser-946 is modified to Phosphoserine; by UHMK1. Acidic residues predominate over residues 949–961 (EKDEDASESEEEY). Ser-957 is modified (phosphoserine). Over residues 963–972 (APPPAPAPSS) the composition is skewed to pro residues.

In the C-terminal section; belongs to the peptidyl-alpha-hydroxyglycine alpha-amidating lyase family. The protein in the N-terminal section; belongs to the copper type II ascorbate-dependent monooxygenase family. As to quaternary structure, monomer. Interacts with RASSF9. The cofactor is Zn(2+). It depends on Cu(2+) as a cofactor.

The protein resides in the cytoplasmic vesicle. It localises to the secretory vesicle membrane. The catalysed reaction is a [peptide]-C-terminal glycine + 2 L-ascorbate + O2 = a [peptide]-C-terminal (2S)-2-hydroxyglycine + 2 monodehydro-L-ascorbate radical + H2O. The enzyme catalyses a [peptide]-C-terminal (2S)-2-hydroxyglycine = a [peptide]-C-terminal amide + glyoxylate. It catalyses the reaction N-dodecanoylglycine + 2 L-ascorbate + O2 = N-dodecanoyl-(2S)-hydroxyglycine + 2 monodehydro-L-ascorbate radical + H2O. It carries out the reaction N-dodecanoyl-(2S)-hydroxyglycine = dodecanamide + glyoxylate. The catalysed reaction is N-(9Z,12Z,15Z)-octadecatrienoylglycine + 2 L-ascorbate + O2 = N-(9Z,12Z,15Z)-octadecatrienoyl-(2S)-hydroxyglycine + 2 monodehydro-L-ascorbate radical + H2O. The enzyme catalyses N-(9Z,12Z,15Z)-octadecatrienoyl-(2S)-hydroxyglycine = (9Z,12Z,15Z)-octadecatrienamide + glyoxylate. It catalyses the reaction N-(9Z-octadecenoyl)glycine + 2 L-ascorbate + O2 = N-(9Z-octadecenoyl)-(2S)-hydroxyglycine + 2 monodehydro-L-ascorbate radical + H2O. It carries out the reaction N-(9Z-octadecenoyl)-(2S)-hydroxyglycine = (9Z)-octadecenamide + glyoxylate. The catalysed reaction is N-tetradecanoylglycine + 2 L-ascorbate + O2 = N-tetradecanoyl-(2S)-hydroxyglycine + 2 monodehydro-L-ascorbate radical + H2O. The enzyme catalyses N-tetradecanoyl-(2S)-hydroxyglycine = tetradecamide + glyoxylate. It catalyses the reaction N-decanoylglycine + 2 L-ascorbate + O2 = N-decanoyl-(2S)-hydroxyglycine + 2 monodehydro-L-ascorbate radical + H2O. It carries out the reaction N-decanoyl-(2S)-hydroxyglycine = decanamide + glyoxylate. The catalysed reaction is N-octanoylglycine + 2 L-ascorbate + O2 = N-octanoyl-(2S)-hydroxyglycine + 2 monodehydro-L-ascorbate radical + H2O. The enzyme catalyses N-octanoyl-(2S)-hydroxyglycine = octanamide + glyoxylate. PAM activity is inhibited by EDTA, phenylglyoxal and diethyl pyrocarbonate. PAL activity is stimulated by cadmium and inhibited by mercury. Bifunctional enzyme that catalyzes amidation of the C-terminus of proteins. Alpha-amidation is present at the C-terminus of many endocrine hormones and neuropeptides and is required for their activity. C-terminal amidation also takes place in response to protein fragmentation triggered by oxidative stress, promoting degradation of amidated protein fragments by the proteasome. Alpha-amidation involves two sequential reactions, both of which are catalyzed by separate catalytic domains of the enzyme. The first step, catalyzed by peptidyl alpha-hydroxylating monooxygenase (PHM) domain, is the copper-, ascorbate-, and O2- dependent stereospecific hydroxylation (with S stereochemistry) at the alpha-carbon (C-alpha) of the C-terminal glycine of the peptidylglycine substrate. The second step, catalyzed by the peptidylglycine amidoglycolate lyase (PAL) domain, is the zinc-dependent cleavage of the N-C-alpha bond, producing the alpha-amidated peptide and glyoxylate. Similarly, catalyzes the two-step conversion of an N-fatty acylglycine to a primary fatty acid amide and glyoxylate. This chain is Peptidyl-glycine alpha-amidating monooxygenase (PAM), found in Bos taurus (Bovine).